The chain runs to 202 residues: Probable molybdenum cofactor guanylyltransferase (202 aa).

Residues Leu-13 to Gly-15, Lys-25, Asp-71, and Asp-103 contribute to the GTP site. Asp-103 is a binding site for Mg(2+).

Belongs to the MobA family. It depends on Mg(2+) as a cofactor.

The protein resides in the cytoplasm. The enzyme catalyses Mo-molybdopterin + GTP + H(+) = Mo-molybdopterin guanine dinucleotide + diphosphate. Transfers a GMP moiety from GTP to Mo-molybdopterin (Mo-MPT) cofactor (Moco or molybdenum cofactor) to form Mo-molybdopterin guanine dinucleotide (Mo-MGD) cofactor. This Opitutus terrae (strain DSM 11246 / JCM 15787 / PB90-1) protein is Probable molybdenum cofactor guanylyltransferase.